Consider the following 56-residue polypeptide: MGHANIWYSHPRRYGQGSRSCRACSNRHGLIRKYGLNICRQCFREYAHDIGFKKLD.

Zn(2+) is bound by residues C21, C24, C39, and C42.

It belongs to the universal ribosomal protein uS14 family. In terms of assembly, component of the 40S small ribosomal subunit. Zn(2+) serves as cofactor.

The protein localises to the cytoplasm. It localises to the cytosol. Its subcellular location is the rough endoplasmic reticulum. This is Small ribosomal subunit protein uS14 (RpS29) from Spodoptera frugiperda (Fall armyworm).